The sequence spans 478 residues: ATP synthase subunit beta (478 aa).

Glycine 155 to threonine 162 is a binding site for ATP.

The protein belongs to the ATPase alpha/beta chains family. As to quaternary structure, F-type ATPases have 2 components, CF(1) - the catalytic core - and CF(0) - the membrane proton channel. CF(1) has five subunits: alpha(3), beta(3), gamma(1), delta(1), epsilon(1). CF(0) has three main subunits: a(1), b(2) and c(9-12). The alpha and beta chains form an alternating ring which encloses part of the gamma chain. CF(1) is attached to CF(0) by a central stalk formed by the gamma and epsilon chains, while a peripheral stalk is formed by the delta and b chains.

It is found in the cell inner membrane. It carries out the reaction ATP + H2O + 4 H(+)(in) = ADP + phosphate + 5 H(+)(out). Its function is as follows. Produces ATP from ADP in the presence of a proton gradient across the membrane. The catalytic sites are hosted primarily by the beta subunits. The protein is ATP synthase subunit beta of Fuscovulum blasticum (Rhodobacter blasticus).